The sequence spans 172 residues: MFDIFTRVVSQADARGEFISSDKLEALKKVVAEGTKRSDAVSRMTNNASSIVTNAARQLFADQPQLIAPGGNAYTNRRMAACLRDMEIILRYVTYATFTGDASVLNDRCLNGLRETYVALGVPGASVAAGVRAMGKAAVAIVMDPAGVTSGDCSSLQQEIELYFETAAKAVE.

Residue Asn72 is modified to N4-methylasparagine. (2R,3E)-phycocyanobilin is bound by residues Cys82 and Cys153.

Belongs to the phycobiliprotein family. Heterodimer of an alpha and a beta subunit, which further assembles into trimers and the trimers into hexamers. Post-translationally, contains two covalently linked bilin chromophores. The chromophore on position 82 is added by the phycocyanobilin lyase CpcUS, while the chromophore on position 153 is added by the phycocyanobilin lyase CpcT.

It localises to the cellular thylakoid membrane. In terms of biological role, light-harvesting photosynthetic bile pigment-protein from the phycobiliprotein complex (phycobilisome, PBS). Phycocyanin is the major phycobiliprotein in the PBS rod. This Picosynechococcus sp. (strain ATCC 27264 / PCC 7002 / PR-6) (Agmenellum quadruplicatum) protein is C-phycocyanin subunit beta (cpcB).